We begin with the raw amino-acid sequence, 273 residues long: Dermonecrotic toxin LdSicTox-alphaIB1aiv (273 aa).

Residue histidine 5 is part of the active site. Residues glutamate 25 and aspartate 27 each coordinate Mg(2+). The active-site Nucleophile is histidine 41. 2 cysteine pairs are disulfide-bonded: cysteine 45-cysteine 51 and cysteine 47-cysteine 190. Aspartate 85 is a binding site for Mg(2+). The N-linked (GlcNAc...) asparagine glycan is linked to asparagine 250.

Belongs to the arthropod phospholipase D family. Class II subfamily. Mg(2+) serves as cofactor. As to expression, expressed by the venom gland.

It is found in the secreted. It carries out the reaction an N-(acyl)-sphingosylphosphocholine = an N-(acyl)-sphingosyl-1,3-cyclic phosphate + choline. The enzyme catalyses an N-(acyl)-sphingosylphosphoethanolamine = an N-(acyl)-sphingosyl-1,3-cyclic phosphate + ethanolamine. It catalyses the reaction a 1-acyl-sn-glycero-3-phosphocholine = a 1-acyl-sn-glycero-2,3-cyclic phosphate + choline. The catalysed reaction is a 1-acyl-sn-glycero-3-phosphoethanolamine = a 1-acyl-sn-glycero-2,3-cyclic phosphate + ethanolamine. In terms of biological role, dermonecrotic toxins cleave the phosphodiester linkage between the phosphate and headgroup of certain phospholipids (sphingolipid and lysolipid substrates), forming an alcohol (often choline) and a cyclic phosphate. This toxin acts on sphingomyelin (SM). It may also act on ceramide phosphoethanolamine (CPE), lysophosphatidylcholine (LPC) and lysophosphatidylethanolamine (LPE), but not on lysophosphatidylserine (LPS), and lysophosphatidylglycerol (LPG). It acts by transphosphatidylation, releasing exclusively cyclic phosphate products as second products. Induces dermonecrosis, hemolysis, increased vascular permeability, edema, inflammatory response, and platelet aggregation. In Loxosceles deserta (Desert recluse spider), this protein is Dermonecrotic toxin LdSicTox-alphaIB1aiv.